The sequence spans 229 residues: Potassium/proton antiporter CemA (229 aa).

2 helical membrane passes run 7–27 and 107–127; these read FTPL…SFSV and ILHF…SILG.

Belongs to the CemA family.

Its subcellular location is the plastid. The protein resides in the chloroplast inner membrane. The catalysed reaction is K(+)(in) + H(+)(out) = K(+)(out) + H(+)(in). In terms of biological role, contributes to K(+)/H(+) antiport activity by supporting proton efflux to control proton extrusion and homeostasis in chloroplasts in a light-dependent manner to modulate photosynthesis. Prevents excessive induction of non-photochemical quenching (NPQ) under continuous-light conditions. Indirectly promotes efficient inorganic carbon uptake into chloroplasts. The protein is Potassium/proton antiporter CemA of Solanum tuberosum (Potato).